Reading from the N-terminus, the 250-residue chain is Probable transcriptional regulatory protein SACE_2018 (250 aa).

Belongs to the TACO1 family.

It localises to the cytoplasm. The protein is Probable transcriptional regulatory protein SACE_2018 of Saccharopolyspora erythraea (strain ATCC 11635 / DSM 40517 / JCM 4748 / NBRC 13426 / NCIMB 8594 / NRRL 2338).